The chain runs to 89 residues: Small ribosomal subunit protein uS15 (89 aa).

This sequence belongs to the universal ribosomal protein uS15 family. In terms of assembly, part of the 30S ribosomal subunit. Forms a bridge to the 50S subunit in the 70S ribosome, contacting the 23S rRNA.

Functionally, one of the primary rRNA binding proteins, it binds directly to 16S rRNA where it helps nucleate assembly of the platform of the 30S subunit by binding and bridging several RNA helices of the 16S rRNA. Its function is as follows. Forms an intersubunit bridge (bridge B4) with the 23S rRNA of the 50S subunit in the ribosome. The sequence is that of Small ribosomal subunit protein uS15 from Chlamydia pneumoniae (Chlamydophila pneumoniae).